The chain runs to 461 residues: tRNA modification GTPase MnmE (461 aa).

Residues arginine 23, glutamate 88, and arginine 127 each contribute to the (6S)-5-formyl-5,6,7,8-tetrahydrofolate site. In terms of domain architecture, TrmE-type G spans 223–383; it reads GLNTVIVGKP…LKECIKNLFF (161 aa). Asparagine 233 is a binding site for K(+). GTP is bound by residues 233 to 238, 252 to 258, and 277 to 280; these read NVGKSS, TEIPGTT, and DTAG. Residue serine 237 participates in Mg(2+) binding. The K(+) site is built by threonine 252, isoleucine 254, and threonine 257. Residue threonine 258 participates in Mg(2+) binding. Lysine 461 contacts (6S)-5-formyl-5,6,7,8-tetrahydrofolate.

Belongs to the TRAFAC class TrmE-Era-EngA-EngB-Septin-like GTPase superfamily. TrmE GTPase family. As to quaternary structure, homodimer. Heterotetramer of two MnmE and two MnmG subunits. The cofactor is K(+).

It is found in the cytoplasm. Functionally, exhibits a very high intrinsic GTPase hydrolysis rate. Involved in the addition of a carboxymethylaminomethyl (cmnm) group at the wobble position (U34) of certain tRNAs, forming tRNA-cmnm(5)s(2)U34. This is tRNA modification GTPase MnmE from Clostridium botulinum (strain Loch Maree / Type A3).